Consider the following 254-residue polypeptide: L-rhamnose 1-dehydrogenase (NADP(+)) (254 aa).

Positions 13, 15, 16, 18, 64, and 91 each coordinate NADP(+). S144 serves as the catalytic Proton donor. S144, S146, Q154, and Y157 together coordinate beta-L-rhamnose. The NADP(+) site is built by Y157 and K161. Residue Y157 is the Proton acceptor of the active site. K161 serves as the catalytic Lowers pKa of active site Tyr. T189 provides a ligand contact to beta-L-rhamnose. I190 lines the NADP(+) pocket. N195 contributes to the beta-L-rhamnose binding site.

Belongs to the short-chain dehydrogenases/reductases (SDR) family.

It catalyses the reaction L-rhamnofuranose + NADP(+) = L-rhamnono-1,4-lactone + NADPH + H(+). Its pathway is carbohydrate degradation; L-rhamnose degradation. Its function is as follows. Involved in the non-phosphorylated metabolic pathway of L-rhamnose catabolism. Catalyzes the oxidation of L-rhamnose to yield L-rhamnono-1,4-lactone. It can also oxidize L-lyxose and L-mannose, and uses only NADP. This chain is L-rhamnose 1-dehydrogenase (NADP(+)), found in Thermoplasma acidophilum (strain ATCC 25905 / DSM 1728 / JCM 9062 / NBRC 15155 / AMRC-C165).